Consider the following 969-residue polypeptide: Rab3 GTPase-activating protein catalytic subunit (969 aa).

A compositionally biased stretch (basic and acidic residues) spans 532–549 (DDGKKSSSSDGARDRSRG). Residues 532–613 (DDGKKSSSSD…PEGRLQPHGT (82 aa)) are disordered. Residues 550-572 (APEGAGPEGAGPAEAAGKSWDSW) show a composition bias toward low complexity. Acidic residues predominate over residues 573 to 589 (SDSEDEFFECVSDTEEM). The segment covering 590–608 (KEDKEEAENRSRSKPEGRL) has biased composition (basic and acidic residues).

This sequence belongs to the Rab3-GAP catalytic subunit family. The Rab3 GTPase-activating complex is a heterodimer composed of rab3gap1 and rab3gap2. The Rab3 GTPase-activating complex interacts with DMXL2. Interacts with LMAN1.

Its subcellular location is the cytoplasm. The protein localises to the endoplasmic reticulum. It is found in the golgi apparatus. It localises to the cis-Golgi network. Functionally, catalytic subunit of the Rab3 GTPase-activating (Rab3GAP) complex composed of rab3gap1 and rab3gap2, which has GTPase-activating protein (GAP) activity towards various Rab3 subfamily members (RAB3A, RAB3B, RAB3C and RAB3D), RAB5A and RAB43, and guanine nucleotide exchange factor (GEF) activity towards RAB18. As part of the Rab3GAP complex, acts as a GAP for Rab3 proteins by converting active RAB3-GTP to the inactive form RAB3-GDP. Rab3 proteins are involved in regulated exocytosis of neurotransmitters and hormones. The Rab3GAP complex, acts as a GEF for RAB18 by promoting the conversion of inactive RAB18-GDP to the active form RAB18-GTP. Recruits and stabilizes RAB18 at the cis-Golgi membrane where RAB18 is most likely activated. Also involved in RAB18 recruitment at the endoplasmic reticulum (ER) membrane where it maintains proper ER structure. Required for normal eye and brain development. May participate in neurodevelopmental processes such as proliferation, migration and differentiation before synapse formation, and non-synaptic vesicular release of neurotransmitters. The chain is Rab3 GTPase-activating protein catalytic subunit (rab3gap1) from Danio rerio (Zebrafish).